Reading from the N-terminus, the 241-residue chain is Dihydropteridine reductase (241 aa).

Residue 11–35 coordinates NADP(+); the sequence is LVYGGRGALGSRCVQAFRARNWWVA. Residues K70, K76, K93, and K99 each carry the N6-succinyllysine modification. Y147 acts as the Proton acceptor in catalysis. S170 carries the post-translational modification Phosphoserine.

This sequence belongs to the short-chain dehydrogenases/reductases (SDR) family. In terms of assembly, homodimer.

The enzyme catalyses 5,6,7,8-tetrahydropteridine + NAD(+) = 6,7-dihydropteridine + NADH + H(+). The catalysed reaction is 5,6,7,8-tetrahydropteridine + NADP(+) = 6,7-dihydropteridine + NADPH + H(+). Catalyzes the conversion of quinonoid dihydrobiopterin into tetrahydrobiopterin. This is Dihydropteridine reductase (Qdpr) from Rattus norvegicus (Rat).